The following is a 337-amino-acid chain: uncharacterized protein (337 aa).

The region spanning 12–60 is the F-box domain; the sequence is SLNYVDLPDTVHRKIFEYLNPWEIFKLSRISKAIHVTILKNKKFAVKDI.

This is an uncharacterized protein from Caenorhabditis elegans.